Consider the following 360-residue polypeptide: MPLSRLIINNFRNLQSLDLELSPNFNFIVGHNGSGKTSLLEAIFYLGHGRSFKSHISNRIIHYQAEDFVLHARIDEGQHQWSVGIQKKRSGDTLLKINGEDGNKISDLAHLLPMQVITPEGLTLLNGGPTFRRAFLDWGLFHQYTEFYSCWANLKRLLKQRNAALHQVRSYAELKPWDIELAKLAEIVSQMRASYAEALRPEIEKTCQFFLPELEIGVSFHQGWEKGTDYAEILAQGFERDKAMGYTMIGPQKADFRFRANGLPVEDVLSRGQLKLLMCALRLAQGEYLVAQKERQCLFLIDDFASELDPIKRELLAHRLRESGSQVFVTAITKDQLNQMQWQESEQDSLFQVQQGMLTK.

30–37 (GHNGSGKT) serves as a coordination point for ATP.

This sequence belongs to the RecF family.

The protein localises to the cytoplasm. The RecF protein is involved in DNA metabolism; it is required for DNA replication and normal SOS inducibility. RecF binds preferentially to single-stranded, linear DNA. It also seems to bind ATP. This Actinobacillus pleuropneumoniae serotype 3 (strain JL03) protein is DNA replication and repair protein RecF.